Consider the following 999-residue polypeptide: Bifunctional glutamine synthetase adenylyltransferase/adenylyl-removing enzyme (999 aa).

Residues 1–493 are adenylyl removase; sequence MFVRKPATER…LHAKLFYQPL (493 aa). The tract at residues 498–999 is adenylyl transferase; that stretch reads GHTALGIGEG…KAVVRKIFGG (502 aa).

It belongs to the GlnE family. It depends on Mg(2+) as a cofactor.

The enzyme catalyses [glutamine synthetase]-O(4)-(5'-adenylyl)-L-tyrosine + phosphate = [glutamine synthetase]-L-tyrosine + ADP. It carries out the reaction [glutamine synthetase]-L-tyrosine + ATP = [glutamine synthetase]-O(4)-(5'-adenylyl)-L-tyrosine + diphosphate. In terms of biological role, involved in the regulation of glutamine synthetase GlnA, a key enzyme in the process to assimilate ammonia. When cellular nitrogen levels are high, the C-terminal adenylyl transferase (AT) inactivates GlnA by covalent transfer of an adenylyl group from ATP to specific tyrosine residue of GlnA, thus reducing its activity. Conversely, when nitrogen levels are low, the N-terminal adenylyl removase (AR) activates GlnA by removing the adenylyl group by phosphorolysis, increasing its activity. The regulatory region of GlnE binds the signal transduction protein PII (GlnB) which indicates the nitrogen status of the cell. In Mycolicibacterium smegmatis (strain ATCC 700084 / mc(2)155) (Mycobacterium smegmatis), this protein is Bifunctional glutamine synthetase adenylyltransferase/adenylyl-removing enzyme.